A 137-amino-acid polypeptide reads, in one-letter code: Protein shisa-5 (137 aa).

The helical transmembrane segment at 3-23 (FGATLAVGLTIFVLSVVTIII) threads the bilayer.

This sequence belongs to the shisa family. Interacts with PDCD6; PDCD6 can stabilize SHISA5.

Its subcellular location is the endoplasmic reticulum membrane. It localises to the nucleus membrane. Functionally, can induce apoptosis in a caspase-dependent manner and plays a role in p53/TP53-dependent apoptosis. The protein is Protein shisa-5 (SHISA5) of Pongo abelii (Sumatran orangutan).